Consider the following 1176-residue polypeptide: Nitrite reductase [NAD(P)H] (1176 aa).

The segment at 1–23 (MANTSLDMASSTSPSPSPESTTT) is disordered. Over residues 10–23 (SSTSPSPSPESTTT) the composition is skewed to low complexity. 26-60 (KRIVVVGLGMVGIAFIEKLIKLDTQRQYEIVVIGE) contacts FAD. NAD(+) is bound at residue 183–215 (STGVVVGGGLLGLEAAKALMDLQVFGRVVVIER). C496, C498, C531, and C534 together coordinate [2Fe-2S] cluster. The [4Fe-4S] cluster site is built by C717, C723, C757, and C761. Position 761 (C761) interacts with siroheme. One can recognise a Rieske; atypical domain in the interval 942–1094 (SYFQGADDLP…VEERDDGMVY (153 aa)). [2Fe-2S] cluster-binding residues include C981 and H983. Low complexity-rich tracts occupy residues 998 to 1008 (PSPSSCSSSAL) and 1030 to 1049 (PTSS…TNPS). Residues 998-1051 (PSPSSCSSSALPPSPPSTPPRSSSPVTSPPQSPTSSATPATTASSSCTTNPSGP) are disordered. Positions 1058 and 1061 each coordinate [2Fe-2S] cluster. Over residues 1124-1139 (LRELDELNKSKGVEGK) the composition is skewed to basic and acidic residues. The tract at residues 1124–1157 (LRELDELNKSKGVEGKKGRRGRKPGASEAGKEVG) is disordered.

Belongs to the nitrite and sulfite reductase 4Fe-4S domain family. Homodimer. It depends on siroheme as a cofactor. Requires [4Fe-4S] cluster as cofactor. FAD serves as cofactor. The cofactor is [2Fe-2S] cluster.

The catalysed reaction is NH4(+) + 3 NADP(+) + 2 H2O = nitrite + 3 NADPH + 5 H(+). The enzyme catalyses NH4(+) + 3 NAD(+) + 2 H2O = nitrite + 3 NADH + 5 H(+). Its pathway is nitrogen metabolism; nitrate reduction (assimilation). In Neurospora crassa (strain ATCC 24698 / 74-OR23-1A / CBS 708.71 / DSM 1257 / FGSC 987), this protein is Nitrite reductase [NAD(P)H] (nit-6).